A 206-amino-acid polypeptide reads, in one-letter code: Uridine kinase (206 aa).

ATP is bound at residue 11 to 18 (GGTGSGKS).

This sequence belongs to the uridine kinase family.

The protein localises to the cytoplasm. It carries out the reaction uridine + ATP = UMP + ADP + H(+). The enzyme catalyses cytidine + ATP = CMP + ADP + H(+). It participates in pyrimidine metabolism; CTP biosynthesis via salvage pathway; CTP from cytidine: step 1/3. It functions in the pathway pyrimidine metabolism; UMP biosynthesis via salvage pathway; UMP from uridine: step 1/1. The sequence is that of Uridine kinase from Clostridium botulinum (strain 657 / Type Ba4).